The primary structure comprises 399 residues: Acetate kinase 2 (399 aa).

Asparagine 10 is a Mg(2+) binding site. Lysine 17 contacts ATP. Arginine 89 provides a ligand contact to substrate. The active-site Proton donor/acceptor is aspartate 146. ATP-binding positions include 206–210, 281–283, and 329–333; these read HLGNG, DCR, and GIGEN. Residue glutamate 384 participates in Mg(2+) binding.

Belongs to the acetokinase family. Homodimer. Mg(2+) is required as a cofactor. It depends on Mn(2+) as a cofactor.

The protein localises to the cytoplasm. It catalyses the reaction acetate + ATP = acetyl phosphate + ADP. It participates in metabolic intermediate biosynthesis; acetyl-CoA biosynthesis; acetyl-CoA from acetate: step 1/2. Catalyzes the formation of acetyl phosphate from acetate and ATP. Can also catalyze the reverse reaction. This chain is Acetate kinase 2, found in Neisseria meningitidis serogroup B (strain ATCC BAA-335 / MC58).